We begin with the raw amino-acid sequence, 842 residues long: Axin-1 (842 aa).

The tract at residues 1 to 75 (MSVKGKGFPL…LDLGYEPEGS (75 aa)) is disordered. The span at 34 to 46 (TTDQRPFSHTYYS) shows a compositional bias: polar residues. An RGS domain is found at 88–211 (SLHSLLDDQD…LKSDIYLEYT (124 aa)). Disordered regions lie at residues 218-242 (PKNYSDQSSGSGTGKGPSGYLPTLN), 277-297 (SHCAGSNRRLSDGREFRPGTW), 316-344 (TSANDSEQQSMSSDADTMSLTDSSVDGIP), 414-451 (KRVRAEEEGDDGDVSSGPSVISHKLPSGPPMHHFNSRY), 482-532 (KTPG…AKVD), 543-562 (YHHVHHHGGVKPKEQIDGES), 615-637 (KKADLGKSESASHEMPVVPEDSE), 656-675 (HKKSNHSSSSAKKQPPTELA), and 729-754 (RLEEEEKKAAKMPQKQRLKPQKKNVS). Positions 316–339 (TSANDSEQQSMSSDADTMSLTDSS) are enriched in polar residues. The tract at residues 348–433 (LRKHYRREMQ…DGDVSSGPSV (86 aa)) is interaction with GSK3B. The interaction with beta-catenin stretch occupies residues 434–508 (ISHKLPSGPP…RSPDGHLSKT (75 aa)). The segment covering 543–552 (YHHVHHHGGV) has biased composition (basic residues). Positions 615 to 626 (KKADLGKSESAS) are enriched in basic and acidic residues. The region spanning 760 to 842 (CDNIVVAYYF…KIIGQVEKID (83 aa)) is the DIX domain.

Homodimer. Interacts with hwa; leading to promote the tankyrase-mediated degradation of axin1. ADP-ribosylated by tankyrase tnks and tnks2. Poly-ADP-ribosylated protein is recognized by rnf146, followed by ubiquitination at 'Lys-48' and subsequent activation of the Wnt signaling pathway. In terms of processing, ubiquitinated by rnf146 when poly-ADP-ribosylated, leading to its degradation and subsequent activation of the Wnt signaling pathway.

The protein localises to the cytoplasm. It localises to the nucleus. The protein resides in the membrane. It is found in the cell membrane. Functionally, component of the beta-catenin destruction complex required for regulating ctnnb1 levels through phosphorylation and ubiquitination, and modulating Wnt-signaling. Controls dorsoventral patterning via two opposing effects; down-regulates ctnnb1 to inhibit the Wnt signaling pathway and ventralize embryos, but also dorsalizes embryos by activating a Wnt-independent JNK signaling pathway. The protein is Axin-1 (axin1) of Xenopus laevis (African clawed frog).